Reading from the N-terminus, the 309-residue chain is 4-hydroxy-3-methylbut-2-enyl diphosphate reductase (309 aa).

Position 13 (C13) interacts with [4Fe-4S] cluster. Positions 42 and 75 each coordinate (2E)-4-hydroxy-3-methylbut-2-enyl diphosphate. Residues H42 and H75 each contribute to the dimethylallyl diphosphate site. Isopentenyl diphosphate contacts are provided by H42 and H75. C97 contributes to the [4Fe-4S] cluster binding site. H125 contributes to the (2E)-4-hydroxy-3-methylbut-2-enyl diphosphate binding site. A dimethylallyl diphosphate-binding site is contributed by H125. H125 lines the isopentenyl diphosphate pocket. E127 (proton donor) is an active-site residue. Position 165 (T165) interacts with (2E)-4-hydroxy-3-methylbut-2-enyl diphosphate. C195 contributes to the [4Fe-4S] cluster binding site. (2E)-4-hydroxy-3-methylbut-2-enyl diphosphate contacts are provided by S223, S224, N225, and S267. Dimethylallyl diphosphate is bound by residues S223, S224, N225, and S267. Isopentenyl diphosphate is bound by residues S223, S224, N225, and S267.

It belongs to the IspH family. Requires [4Fe-4S] cluster as cofactor.

It carries out the reaction isopentenyl diphosphate + 2 oxidized [2Fe-2S]-[ferredoxin] + H2O = (2E)-4-hydroxy-3-methylbut-2-enyl diphosphate + 2 reduced [2Fe-2S]-[ferredoxin] + 2 H(+). It catalyses the reaction dimethylallyl diphosphate + 2 oxidized [2Fe-2S]-[ferredoxin] + H2O = (2E)-4-hydroxy-3-methylbut-2-enyl diphosphate + 2 reduced [2Fe-2S]-[ferredoxin] + 2 H(+). The protein operates within isoprenoid biosynthesis; dimethylallyl diphosphate biosynthesis; dimethylallyl diphosphate from (2E)-4-hydroxy-3-methylbutenyl diphosphate: step 1/1. It participates in isoprenoid biosynthesis; isopentenyl diphosphate biosynthesis via DXP pathway; isopentenyl diphosphate from 1-deoxy-D-xylulose 5-phosphate: step 6/6. Functionally, catalyzes the conversion of 1-hydroxy-2-methyl-2-(E)-butenyl 4-diphosphate (HMBPP) into a mixture of isopentenyl diphosphate (IPP) and dimethylallyl diphosphate (DMAPP). Acts in the terminal step of the DOXP/MEP pathway for isoprenoid precursor biosynthesis. The protein is 4-hydroxy-3-methylbut-2-enyl diphosphate reductase of Chlamydia caviae (strain ATCC VR-813 / DSM 19441 / 03DC25 / GPIC) (Chlamydophila caviae).